The primary structure comprises 548 residues: Terpene synthase 1 (548 aa).

Positions 301, 305, 445, and 453 each coordinate Mg(2+). The DDXXD motif signature appears at 301–305 (DDTYD).

It belongs to the terpene synthase family. Tpsa subfamily. The cofactor is Mg(2+). Requires Mn(2+) as cofactor.

It carries out the reaction (2E,6E)-farnesyl diphosphate = (+)-valencene + diphosphate. Its pathway is secondary metabolite biosynthesis; terpenoid biosynthesis. Sesquiterpene synthase involved in the biosynthesis of volatile compounds which contribute to fruit flavor and aroma. Mediates the conversion of (2E,6E)-farnesyl diphosphate (FPP) into (+)-valencene. No activity detected with geranyl diphosphate (GPP). The polypeptide is Terpene synthase 1 (Citrus sinensis (Sweet orange)).